A 101-amino-acid polypeptide reads, in one-letter code: Urease subunit beta (101 aa).

The protein belongs to the urease beta subunit family. Heterotrimer of UreA (gamma), UreB (beta) and UreC (alpha) subunits. Three heterotrimers associate to form the active enzyme.

It localises to the cytoplasm. It catalyses the reaction urea + 2 H2O + H(+) = hydrogencarbonate + 2 NH4(+). It functions in the pathway nitrogen metabolism; urea degradation; CO(2) and NH(3) from urea (urease route): step 1/1. This Cereibacter sphaeroides (strain ATCC 17025 / ATH 2.4.3) (Rhodobacter sphaeroides) protein is Urease subunit beta.